The following is a 223-amino-acid chain: Deoxyribose-phosphate aldolase (223 aa).

The active-site Proton donor/acceptor is the D89. Residue K152 is the Schiff-base intermediate with acetaldehyde of the active site. The Proton donor/acceptor role is filled by K181.

Belongs to the DeoC/FbaB aldolase family. DeoC type 1 subfamily.

The protein resides in the cytoplasm. It catalyses the reaction 2-deoxy-D-ribose 5-phosphate = D-glyceraldehyde 3-phosphate + acetaldehyde. Its pathway is carbohydrate degradation; 2-deoxy-D-ribose 1-phosphate degradation; D-glyceraldehyde 3-phosphate and acetaldehyde from 2-deoxy-alpha-D-ribose 1-phosphate: step 2/2. Its function is as follows. Catalyzes a reversible aldol reaction between acetaldehyde and D-glyceraldehyde 3-phosphate to generate 2-deoxy-D-ribose 5-phosphate. In Bacillus cereus (strain G9842), this protein is Deoxyribose-phosphate aldolase.